The following is a 1023-amino-acid chain: Protein FAM13A (1023 aa).

The Rho-GAP domain occupies 43–231 (VSLQELERQG…KILENYNTLF (189 aa)). Residues 269 to 290 (LERDMPKPPPKTKIPKSRSEGS) form a disordered region. Position 345 is a phosphoserine (S345). Disordered regions lie at residues 381–437 (VNNS…SGFN) and 459–562 (CAGE…EVPQ). Low complexity predominate over residues 384–405 (SGGQSSEDSESGTLSASSATSA). Composition is skewed to basic and acidic residues over residues 412–427 (SKEQ…KGLI) and 509–524 (SDER…HTQH). Polar residues predominate over residues 536–549 (PSLSDTKQQRNQDA). Phosphoserine is present on residues S597 and S617. Disordered regions lie at residues 628–663 (QYLD…QEDL) and 726–759 (ISEE…KKQE). A coiled-coil region spans residues 666–730 (AQLTRRIQSL…ESKLKISEED (65 aa)). The residue at position 727 (S727) is a Phosphoserine. T732 carries the phosphothreonine modification. Polar residues predominate over residues 738–748 (RSNTLPKSFGS). Positions 750-759 (LEKEDEKKQE) are enriched in basic and acidic residues. The stretch at 946-978 (ASIPELLEHLQEMREEKKRIRKKLRDFEDNFFR) forms a coiled coil.

This sequence belongs to the FAM13 family. As to expression, isoform 1 is widely expressed, with highest expression in skeletal muscle, thymus, brain and lung. Isoform 3 is less abundant than isoform 1 and predominantly expressed in kidney, pancreas, liver, lung and thymus.

The chain is Protein FAM13A (FAM13A) from Homo sapiens (Human).